We begin with the raw amino-acid sequence, 2224 residues long: Myomegalin (2224 aa).

Coiled coils occupy residues 41 to 97 (REDV…RQQE), 162 to 205 (DQYS…LLEE), 236 to 318 (VSES…REML), and 350 to 682 (CSQL…ALRQ). The disordered stretch occupies residues 206–236 (PASMEVQPVPKGLPTQQKPDLHETPTTQPPV). Residues 219 to 236 (PTQQKPDLHETPTTQPPV) show a composition bias toward polar residues. Residues 703-751 (GVTSIGPHHGEQTDQGSMQMPSRDDSTSLTAREEASIPRSTLGDSDTVA) are disordered. Phosphothreonine is present on Thr-705. A compositionally biased stretch (basic and acidic residues) spans 724–738 (SRDDSTSLTAREEAS). Coiled coils occupy residues 745-822 (GDSD…QLVD), 856-886 (NKRQ…RQLY), and 949-986 (AQEM…AGFS). Disordered stretches follow at residues 1098-1128 (TGLP…SLPL), 1141-1161 (NKSQ…GSTK), and 1270-1298 (VSPP…DDSS). Residues 1112-1124 (ENTTTARPGSRPQ) are compositionally biased toward polar residues. 3 coiled-coil regions span residues 1159-1187 (STKH…SEAT), 1295-1331 (DDSS…LSAT), and 1377-1401 (GLQA…LPKT). Residues 1276–1298 (KPLENKPGKQEEFRAHGTPDDSS) show a composition bias toward basic and acidic residues. The region spanning 1497–1588 (KDHKSEKEEA…DEKKPSPSHS (92 aa)) is the Olduvai domain. Disordered regions lie at residues 1576-1637 (THYD…SLSQ), 1736-1757 (SSGQ…LSSG), 1805-1824 (LSST…QGLE), and 1962-2001 (KASL…LNSP). The span at 1599–1609 (ESSSSPISLPT) shows a compositional bias: polar residues. Residues 1748–1757 (GSVSGELSSG) show a composition bias toward low complexity. Residues 1769-1958 (GADLLEEHLG…RLQLEQQMDR (190 aa)) are a coiled coil. A coiled-coil region spans residues 2148 to 2191 (KEGQLMEKELLDLRAQVSQQEQILQNTAARLKRANQRKKSMEQF).

In terms of assembly, interacts with PDE4D. Isoform 2 interacts with MAPRE1 and MAPRE3. Isoform 2 forms a pericentrosomal complex with AKAP9, CDK5RAP2 and EB1/MAPRE1; within this complex, may mediate MAPRE1-binding to CDK5RAP2. Interaction with AKAP9 stabilizes both proteins. Isoform 2 interacts (via N-terminus) with CAMSAP2; this interaction is much stronger in the presence of AKAP9. In complex with AKAP9, Isoform 2 recruits CAMSAP2 to the Golgi apparatus. Isoform 2 interacts with unglycosylated LGALS3BP; this interaction may connect the pericentrosomal complex to the gamma-tubulin ring complex (gamma-TuRC) to promote microtubule assembly and acetylation.

It localises to the cytoplasm. It is found in the cytoskeleton. Its subcellular location is the microtubule organizing center. The protein localises to the centrosome. The protein resides in the golgi apparatus. Functionally, functions as an anchor sequestering components of the cAMP-dependent pathway to Golgi and/or centrosomes. Participates in microtubule dynamics, promoting microtubule assembly. Depending upon the cell context, may act at the level of the Golgi apparatus or that of the centrosome. In complex with AKAP9, recruits CAMSAP2 to the Golgi apparatus and tethers non-centrosomal minus-end microtubules to the Golgi, an important step for polarized cell movement. In complex with AKAP9, EB1/MAPRE1 and CDK5RAP2, contributes to microtubules nucleation and extension from the centrosome to the cell periphery, a crucial process for directed cell migration, mitotic spindle orientation and cell-cycle progression. This is Myomegalin (Pde4dip) from Mus musculus (Mouse).